Reading from the N-terminus, the 147-residue chain is Large ribosomal subunit protein uL13 (147 aa).

Residues 127-147 (GPEHPHSAQQPKVLEIQGAAR) are disordered.

The protein belongs to the universal ribosomal protein uL13 family. Part of the 50S ribosomal subunit.

Its function is as follows. This protein is one of the early assembly proteins of the 50S ribosomal subunit, although it is not seen to bind rRNA by itself. It is important during the early stages of 50S assembly. This is Large ribosomal subunit protein uL13 from Verminephrobacter eiseniae (strain EF01-2).